A 276-amino-acid polypeptide reads, in one-letter code: NH(3)-dependent NAD(+) synthetase (276 aa).

43–50 is an ATP binding site; sequence GISGGVDS. Asp49 provides a ligand contact to Mg(2+). A deamido-NAD(+)-binding site is contributed by Arg146. Position 166 (Thr166) interacts with ATP. Glu171 contacts Mg(2+). Lys179 and Asp186 together coordinate deamido-NAD(+). The ATP site is built by Lys195 and Thr217. 266–267 is a binding site for deamido-NAD(+); that stretch reads HK.

This sequence belongs to the NAD synthetase family. In terms of assembly, homodimer.

It catalyses the reaction deamido-NAD(+) + NH4(+) + ATP = AMP + diphosphate + NAD(+) + H(+). It participates in cofactor biosynthesis; NAD(+) biosynthesis; NAD(+) from deamido-NAD(+) (ammonia route): step 1/1. In terms of biological role, catalyzes the ATP-dependent amidation of deamido-NAD to form NAD. Uses ammonia as a nitrogen source. This chain is NH(3)-dependent NAD(+) synthetase, found in Vibrio vulnificus (strain YJ016).